Consider the following 522-residue polypeptide: Nuclear pore glycoprotein p62 (522 aa).

Ser2 bears the N-acetylserine mark. Tandem repeats lie at residues Phe6–Gly7, Phe44–Gly45, Phe76–Gly77, Phe114–Gly115, and Phe142–Gly143. Residues Phe6–Gly143 form a 5 X 2 AA repeats of F-G region. Positions Ser169–Ser179 are enriched in polar residues. 2 disordered regions span residues Ser169 to Thr215 and Ala260 to Thr288. Low complexity-rich tracts occupy residues Ala180–Thr215 and Gly262–Thr288. The interval Met328–Leu458 is required for centrosome localization. A coiled-coil region spans residues Met328 to Leu458. A glycan (O-linked (GlcNAc) threonine) is linked at Thr373. Phosphoserine is present on residues Ser408 and Ser418. The O-linked (GlcNAc) serine glycan is linked to Ser468.

This sequence belongs to the nucleoporin NSP1/NUP62 family. In terms of assembly, component of the p62 complex, a complex at least composed of NUP62, NUP54, and NUP58. Interacts with NUP88. Interacts with NUTF2. Interacts with HIKESHI. Interacts with OSBPL8. Interacts with CAPG. Interacts with SAS6 and TUBG1 at the centrosome. Interacts with MCM3AP isoform GANP. (Microbial infection) Interacts with Epstein-barr virus BGLF4; this interaction allows BGLF4 nuclear entry. In terms of processing, O-glycosylated. Contains about 10 N-acetylglucosamine side chain sites predicted for the entire protein, among which only one in the C-terminal. Post-translationally, the inner channel of the NPC has a different redox environment from the cytoplasm and allows the formation of interchain disulfide bonds between some nucleoporins, the significant increase of these linkages upon oxidative stress reduces the permeability of the NPC.

It localises to the nucleus. Its subcellular location is the nuclear pore complex. The protein localises to the cytoplasm. The protein resides in the cytoskeleton. It is found in the spindle pole. It localises to the nucleus envelope. Its subcellular location is the microtubule organizing center. The protein localises to the centrosome. Functionally, essential component of the nuclear pore complex. The N-terminal is probably involved in nucleocytoplasmic transport. The C-terminal is involved in protein-protein interaction probably via coiled-coil formation, promotes its association with centrosomes and may function in anchorage of p62 to the pore complex. Plays a role in mitotic cell cycle progression by regulating centrosome segregation, centriole maturation and spindle orientation. It might be involved in protein recruitment to the centrosome after nuclear breakdown. This is Nuclear pore glycoprotein p62 (NUP62) from Homo sapiens (Human).